A 640-amino-acid polypeptide reads, in one-letter code: Threonine--tRNA ligase (640 aa).

A TGS domain is found at 1-60 (MKITFPDGAVKEFEPGVSTADIAASISPGLKKKALAGKLNGELLDLVTPIHEDGAIEIVT). Residues 241-538 (DHRKLGKELD…LIEEYKGAFP (298 aa)) form a catalytic region. Residues Cys-334, His-385, and His-515 each contribute to the Zn(2+) site.

It belongs to the class-II aminoacyl-tRNA synthetase family. In terms of assembly, homodimer. Requires Zn(2+) as cofactor.

It is found in the cytoplasm. It catalyses the reaction tRNA(Thr) + L-threonine + ATP = L-threonyl-tRNA(Thr) + AMP + diphosphate + H(+). Catalyzes the attachment of threonine to tRNA(Thr) in a two-step reaction: L-threonine is first activated by ATP to form Thr-AMP and then transferred to the acceptor end of tRNA(Thr). Also edits incorrectly charged L-seryl-tRNA(Thr). In Listeria monocytogenes serotype 4b (strain CLIP80459), this protein is Threonine--tRNA ligase.